The chain runs to 253 residues: 3-dehydroquinate dehydratase (253 aa).

3-dehydroquinate is bound by residues 46–48 (EWR) and arginine 82. Histidine 143 (proton donor/acceptor) is an active-site residue. Lysine 170 (schiff-base intermediate with substrate) is an active-site residue. Positions 213, 232, and 236 each coordinate 3-dehydroquinate.

The protein belongs to the type-I 3-dehydroquinase family. As to quaternary structure, homodimer.

The enzyme catalyses 3-dehydroquinate = 3-dehydroshikimate + H2O. Its pathway is metabolic intermediate biosynthesis; chorismate biosynthesis; chorismate from D-erythrose 4-phosphate and phosphoenolpyruvate: step 3/7. In terms of biological role, involved in the third step of the chorismate pathway, which leads to the biosynthesis of aromatic amino acids. Catalyzes the cis-dehydration of 3-dehydroquinate (DHQ) and introduces the first double bond of the aromatic ring to yield 3-dehydroshikimate. The sequence is that of 3-dehydroquinate dehydratase from Syntrophotalea carbinolica (strain DSM 2380 / NBRC 103641 / GraBd1) (Pelobacter carbinolicus).